The primary structure comprises 186 residues: Shikimate kinase (186 aa).

15–20 (GAGKTT) contacts ATP. T19 contributes to the Mg(2+) binding site. Positions 37, 61, and 83 each coordinate substrate. An ATP-binding site is contributed by R121. R140 provides a ligand contact to substrate.

This sequence belongs to the shikimate kinase family. In terms of assembly, monomer. Requires Mg(2+) as cofactor.

It localises to the cytoplasm. The catalysed reaction is shikimate + ATP = 3-phosphoshikimate + ADP + H(+). The protein operates within metabolic intermediate biosynthesis; chorismate biosynthesis; chorismate from D-erythrose 4-phosphate and phosphoenolpyruvate: step 5/7. Its function is as follows. Catalyzes the specific phosphorylation of the 3-hydroxyl group of shikimic acid using ATP as a cosubstrate. This Psychrobacter cryohalolentis (strain ATCC BAA-1226 / DSM 17306 / VKM B-2378 / K5) protein is Shikimate kinase.